A 420-amino-acid chain; its full sequence is Deoxyribodipyrimidine photo-lyase (420 aa).

The Photolyase/cryptochrome alpha/beta domain maps to 2–124; the sequence is GPLLVWHRGD…PLHLLPAPHL (123 aa). Residues 147 to 176 are disordered; that stretch reads APPLPPPEALPKGPEEGEIPREDPGLPLPE. Basic and acidic residues predominate over residues 159-170; that stretch reads GPEEGEIPREDP. Tyrosine 197 contributes to the FAD binding site. Arginine 201 provides a ligand contact to DNA. Residues 209–213, tryptophan 241, arginine 248, asparagine 310, and 341–343 each bind FAD; these read GSRLS and DGD. Interaction with DNA stretches follow at residues 244–251 and 310–311; these read ELLWRDFS and NR. Residue glutamine 373 coordinates DNA.

The protein belongs to the DNA photolyase class-1 family. Monomer. Requires FAD as cofactor.

The enzyme catalyses cyclobutadipyrimidine (in DNA) = 2 pyrimidine residues (in DNA).. Functionally, involved in repair of UV radiation-induced DNA damage. Catalyzes the light-dependent monomerization (300-600 nm) of cyclobutyl pyrimidine dimers (in cis-syn configuration), which are formed between adjacent bases on the same DNA strand upon exposure to ultraviolet radiation. In Thermus thermophilus (strain ATCC 27634 / DSM 579 / HB8), this protein is Deoxyribodipyrimidine photo-lyase (phr).